The sequence spans 607 residues: UvrABC system protein C (607 aa).

The 78-residue stretch at 15–92 (SQPGSYQMKD…IKRYRPYFNI (78 aa)) folds into the GIY-YIG domain. A UVR domain is found at 197–232 (GKAISDIKKKMKRASDSTEYELAADFRDRLKFIDQT).

It belongs to the UvrC family. In terms of assembly, interacts with UvrB in an incision complex.

It is found in the cytoplasm. The UvrABC repair system catalyzes the recognition and processing of DNA lesions. UvrC both incises the 5' and 3' sides of the lesion. The N-terminal half is responsible for the 3' incision and the C-terminal half is responsible for the 5' incision. The protein is UvrABC system protein C of Oenococcus oeni (strain ATCC BAA-331 / PSU-1).